The following is a 216-amino-acid chain: Cytochrome c biogenesis ATP-binding export protein CcmA (216 aa).

The ABC transporter domain occupies 18-216 (LQVEGLAGRR…AHARTLEISA (199 aa)). Residue 50-57 (GHNGSGKT) participates in ATP binding.

It belongs to the ABC transporter superfamily. CcmA exporter (TC 3.A.1.107) family. In terms of assembly, the complex is composed of two ATP-binding proteins (CcmA) and two transmembrane proteins (CcmB).

The protein localises to the cell inner membrane. It carries out the reaction heme b(in) + ATP + H2O = heme b(out) + ADP + phosphate + H(+). Part of the ABC transporter complex CcmAB involved in the biogenesis of c-type cytochromes; once thought to export heme, this seems not to be the case, but its exact role is uncertain. Responsible for energy coupling to the transport system. This is Cytochrome c biogenesis ATP-binding export protein CcmA from Nitrosococcus oceani (strain ATCC 19707 / BCRC 17464 / JCM 30415 / NCIMB 11848 / C-107).